The following is a 105-amino-acid chain: uncharacterized protein (105 aa).

The segment at 80–105 is disordered; sequence TGGPTSSTCTRRSDLATGRGSDRRPD.

This is an uncharacterized protein from Micromonospora rosea.